We begin with the raw amino-acid sequence, 624 residues long: ATP-dependent zinc metalloprotease FtsH (624 aa).

The Cytoplasmic segment spans residues 1–7; sequence MPRAPFS. The helical transmembrane segment at 8-28 threads the bilayer; sequence LLALVLGLAFLAWAFSLAGTV. Over 29 to 103 the chain is Periplasmic; that stretch reads GAPSGTVNYT…VRVEPPQGQN (75 aa). Residues 104–124 traverse the membrane as a helical segment; sequence ALGFLWPLLLVGLLIGALYYF. Residues 125 to 624 are Cytoplasmic-facing; it reads SRNGRAGPSD…VKPGGALGGA (500 aa). ATP contacts are provided by residues Ala159, 199–203, and His204; that span reads GVGKT. His418 contacts Zn(2+). Glu419 is an active-site residue. Zn(2+) is bound by residues His422 and Asp493. The tract at residues 595–624 is disordered; the sequence is PLEAPEEAREEREPPRVVPKVKPGGALGGA. The span at 600–609 shows a compositional bias: basic and acidic residues; sequence EEAREEREPP.

The protein in the central section; belongs to the AAA ATPase family. This sequence in the C-terminal section; belongs to the peptidase M41 family. As to quaternary structure, the isolated soluble domain (residues 126-624) forms a stable hexamer in which the AAA+ domains (residues 126-400) are alternatively open or closed. It depends on Zn(2+) as a cofactor.

It is found in the cell inner membrane. The proteolytic activity is dependent on ATP, both the ATPase and protease activities are inhibited by ADP. In terms of biological role, acts as a processive, ATP-dependent zinc metallopeptidase for both cytoplasmic and membrane proteins. Plays a role in the quality control of integral membrane proteins. Its function is as follows. Degrades preferentially unfolded substrates in a processive, ATP-dependent manner, usually after hydrophobic residues. In Thermus thermophilus (strain ATCC 27634 / DSM 579 / HB8), this protein is ATP-dependent zinc metalloprotease FtsH.